We begin with the raw amino-acid sequence, 404 residues long: Argininosuccinate synthase (404 aa).

ATP-binding positions include 10-18 (AFSGGLDTS) and Ala-37. L-citrulline-binding residues include Tyr-88 and Ser-93. ATP is bound at residue Gly-118. 3 residues coordinate L-aspartate: Thr-120, Asn-124, and Asp-125. Asn-124 contacts L-citrulline. L-citrulline contacts are provided by Arg-128, Ser-179, Ser-188, Glu-264, and Tyr-276.

Belongs to the argininosuccinate synthase family. Type 1 subfamily. Homotetramer.

The protein resides in the cytoplasm. The enzyme catalyses L-citrulline + L-aspartate + ATP = 2-(N(omega)-L-arginino)succinate + AMP + diphosphate + H(+). Its pathway is amino-acid biosynthesis; L-arginine biosynthesis; L-arginine from L-ornithine and carbamoyl phosphate: step 2/3. In Nitrosomonas eutropha (strain DSM 101675 / C91 / Nm57), this protein is Argininosuccinate synthase.